Reading from the N-terminus, the 380-residue chain is SAM and SH3 domain-containing protein 3 (380 aa).

The segment at 1–174 (MLRRKPSNAS…STAPQYTGPF (174 aa)) is disordered. The span at 22 to 41 (LQRSSSFKDFAKSKPSSPVV) shows a compositional bias: low complexity. Phosphoserine occurs at positions 27, 34, and 42. Thr61 bears the Phosphothreonine mark. Residues 84–93 (MNRKTGKKMV) are compositionally biased toward basic residues. Ser97 carries the post-translational modification Phosphoserine. At Thr103 the chain carries Phosphothreonine. Ser110 bears the Phosphoserine mark. At Thr112 the chain carries Phosphothreonine. Phosphoserine is present on residues Ser113 and Ser120. Positions 143–158 (RQASTGSELCSPSPGS) are enriched in polar residues. One can recognise an SH3 domain in the interval 173–234 (PFCGRARVHT…KFIYVDVLPE (62 aa)). The region spanning 252 to 316 (PKPKTLHELL…LTAAELLLDY (65 aa)) is the SAM domain. Phosphothreonine is present on Thr318. The span at 318–327 (TGSEEAEEGT) shows a compositional bias: acidic residues. Positions 318–380 (TGSEEAEEGT…LHGLSLSGAP (63 aa)) are disordered. Ser320 is modified (phosphoserine).

The protein belongs to the SASH family.

May function as a signaling adapter protein in lymphocytes. In Bos taurus (Bovine), this protein is SAM and SH3 domain-containing protein 3.